The primary structure comprises 267 residues: Phosphate import ATP-binding protein PstB (267 aa).

One can recognise an ABC transporter domain in the interval 21-262 (VAARNLDFYY…PSKQQTEDYI (242 aa)). 53–60 (GPSGCGKS) lines the ATP pocket.

This sequence belongs to the ABC transporter superfamily. Phosphate importer (TC 3.A.1.7) family. As to quaternary structure, the complex is composed of two ATP-binding proteins (PstB), two transmembrane proteins (PstC and PstA) and a solute-binding protein (PstS).

The protein localises to the cell inner membrane. It catalyses the reaction phosphate(out) + ATP + H2O = ADP + 2 phosphate(in) + H(+). Its function is as follows. Part of the ABC transporter complex PstSACB involved in phosphate import. Responsible for energy coupling to the transport system. The polypeptide is Phosphate import ATP-binding protein PstB (Xanthomonas euvesicatoria pv. vesicatoria (strain 85-10) (Xanthomonas campestris pv. vesicatoria)).